Here is a 338-residue protein sequence, read N- to C-terminus: Ketol-acid reductoisomerase (NADP(+)) (338 aa).

Positions 1–181 (MKVYYDKDAD…GGTKGGVIET (181 aa)) constitute a KARI N-terminal Rossmann domain. NADP(+) is bound by residues 24-27 (YGSQ), R47, and S52. H107 is a catalytic residue. G133 is a binding site for NADP(+). The region spanning 182 to 327 (NFREETETDL…GQLRDMMPWI (146 aa)) is the KARI C-terminal knotted domain. D190, E194, E226, and E230 together coordinate Mg(2+). S251 is a substrate binding site.

Belongs to the ketol-acid reductoisomerase family. It depends on Mg(2+) as a cofactor.

The catalysed reaction is (2R)-2,3-dihydroxy-3-methylbutanoate + NADP(+) = (2S)-2-acetolactate + NADPH + H(+). It catalyses the reaction (2R,3R)-2,3-dihydroxy-3-methylpentanoate + NADP(+) = (S)-2-ethyl-2-hydroxy-3-oxobutanoate + NADPH + H(+). It participates in amino-acid biosynthesis; L-isoleucine biosynthesis; L-isoleucine from 2-oxobutanoate: step 2/4. It functions in the pathway amino-acid biosynthesis; L-valine biosynthesis; L-valine from pyruvate: step 2/4. In terms of biological role, involved in the biosynthesis of branched-chain amino acids (BCAA). Catalyzes an alkyl-migration followed by a ketol-acid reduction of (S)-2-acetolactate (S2AL) to yield (R)-2,3-dihydroxy-isovalerate. In the isomerase reaction, S2AL is rearranged via a Mg-dependent methyl migration to produce 3-hydroxy-3-methyl-2-ketobutyrate (HMKB). In the reductase reaction, this 2-ketoacid undergoes a metal-dependent reduction by NADPH to yield (R)-2,3-dihydroxy-isovalerate. The sequence is that of Ketol-acid reductoisomerase (NADP(+)) from Aromatoleum aromaticum (strain DSM 19018 / LMG 30748 / EbN1) (Azoarcus sp. (strain EbN1)).